Reading from the N-terminus, the 595-residue chain is Torsin-1A-interacting protein 1 (595 aa).

Residues Met1–Ala221 are disordered. Topologically, residues Met1–Trp351 are nuclear. The span at Pro24–Asp38 shows a compositional bias: basic and acidic residues. A Phosphoserine modification is found at Ser60. Composition is skewed to basic and acidic residues over residues Phe70 to Glu101 and Arg115 to Gln132. Residues His133–Thr143 are compositionally biased toward polar residues. Phosphoserine occurs at positions 134, 140, 151, 153, 154, and 155. The span at Leu204 to Lys215 shows a compositional bias: polar residues. Position 235 is a phosphothreonine (Thr235). 3 positions are modified to phosphoserine: Ser241, Ser244, and Ser255. Disordered regions lie at residues Ala250–Glu286 and Ile319–His340. The segment covering Arg251–Ala262 has biased composition (basic and acidic residues). The span at Ile319 to Gln335 shows a compositional bias: polar residues. Residue Lys321 forms a Glycyl lysine isopeptide (Lys-Gly) (interchain with G-Cter in SUMO2) linkage. At Ser328 the chain carries Phosphoserine. A helical membrane pass occupies residues Leu352–Val372. Residues His368–Leu595 are interaction with TOR1A. Positions Glu373–Lys400 form a coiled coil. Over Glu373 to Leu595 the chain is Perinuclear space. N-linked (GlcNAc...) asparagine glycosylation is present at Asn411.

It belongs to the TOR1AIP family. In terms of assembly, interacts with ATP1B4. Interacts with TOR1A (ATP-bound). Interacts with TOR1B, TOR2A and TOR3A. Interacts with VIM. In terms of tissue distribution, expressed in the spinal cord and liver (at protein level).

The protein resides in the nucleus inner membrane. Required for nuclear membrane integrity. Induces TOR1A and TOR1B ATPase activity and is required for their location on the nuclear membrane. Binds to A- and B-type lamins. Possible role in membrane attachment and assembly of the nuclear lamina. This chain is Torsin-1A-interacting protein 1 (Tor1aip1), found in Mus musculus (Mouse).